Consider the following 307-residue polypeptide: MNYFRTAILLAGLTGLFMGVGYLIGGASGATIALVVAAATNLFAYWNSDRMVLSMYGAHEVDPGTAPDLHRLVAELASRAGLPMPRVFVMDNPQPNAFATGRNPENAAVAVTTGLMQSLSREELAGVIAHELAHIKHHDTLLMTITATIAGAISMLAQFGMFFGGNRDNHGPGIIGSLAMMILAPFGAMLVQMAISRTREYAADEMGARICGQPMWLASALARIENAAHQVPNMEAERAPATAHMFIINPLSGRGMDNLFATHPSTENRIAALQRLAGQSGGGLAPGGPPPDPSSPWNKGSRRGPWG.

A run of 2 helical transmembrane segments spans residues 7–27 (AILLAGLTGLFMGVGYLIGGA) and 28–48 (SGATIALVVAAATNLFAYWNS). Histidine 130 contributes to the Zn(2+) binding site. Residue glutamate 131 is part of the active site. Residue histidine 134 coordinates Zn(2+). 2 helical membrane-spanning segments follow: residues 145–165 (ITATIAGAISMLAQFGMFFGG) and 171–191 (GPGIIGSLAMMILAPFGAMLV). Position 200 (glutamate 200) interacts with Zn(2+). The tract at residues 277 to 307 (AGQSGGGLAPGGPPPDPSSPWNKGSRRGPWG) is disordered.

Belongs to the peptidase M48B family. Requires Zn(2+) as cofactor.

It localises to the cell inner membrane. The protein is Protease HtpX homolog of Nitrobacter winogradskyi (strain ATCC 25391 / DSM 10237 / CIP 104748 / NCIMB 11846 / Nb-255).